Reading from the N-terminus, the 829-residue chain is Periplasmic nitrate reductase (829 aa).

Positions 1–36 (MARRDFIKQTAAAAAATVAGVPLTGYTQNIVTESEA) form a signal peptide, tat-type signal. In terms of domain architecture, 4Fe-4S Mo/W bis-MGD-type spans 39–95 (LKWSKAPCRFCGTGCGVNVAVKDNQVVATHGDFNAEVNKGLNCVKGYFLSKIMYGSD). The [4Fe-4S] cluster site is built by Cys46, Cys49, Cys53, and Cys81. Residues Lys83, Gln150, Asn175, Cys179, 212–219 (WGSNMAEM), 243–247 (STFEH), 262–264 (QSD), Met373, Gln377, Asn483, 509–510 (SD), Lys532, Asp559, and 719–728 (TGRVLEHWHS) each bind Mo-bis(molybdopterin guanine dinucleotide). Residue Trp795 participates in substrate binding. Asn803 and Lys820 together coordinate Mo-bis(molybdopterin guanine dinucleotide).

This sequence belongs to the prokaryotic molybdopterin-containing oxidoreductase family. NasA/NapA/NarB subfamily. In terms of assembly, component of the periplasmic nitrate reductase NapAB complex composed of NapA and NapB. [4Fe-4S] cluster serves as cofactor. The cofactor is Mo-bis(molybdopterin guanine dinucleotide). Post-translationally, predicted to be exported by the Tat system. The position of the signal peptide cleavage has not been experimentally proven.

It localises to the periplasm. It catalyses the reaction 2 Fe(II)-[cytochrome] + nitrate + 2 H(+) = 2 Fe(III)-[cytochrome] + nitrite + H2O. Its function is as follows. Catalytic subunit of the periplasmic nitrate reductase complex NapAB. Receives electrons from NapB and catalyzes the reduction of nitrate to nitrite. The protein is Periplasmic nitrate reductase of Bordetella bronchiseptica (strain ATCC BAA-588 / NCTC 13252 / RB50) (Alcaligenes bronchisepticus).